We begin with the raw amino-acid sequence, 287 residues long: Uroporphyrinogen-III C-methyltransferase (287 aa).

A compositionally biased stretch (polar residues) spans 1-10; sequence MAGKTVTNGA. The tract at residues 1–24 is disordered; it reads MAGKTVTNGAAQGKAARSGADGAV. S-adenosyl-L-methionine-binding positions include proline 40, 116–118, threonine 146, and methionine 199; that span reads GGD.

The protein belongs to the precorrin methyltransferase family.

The enzyme catalyses uroporphyrinogen III + 2 S-adenosyl-L-methionine = precorrin-2 + 2 S-adenosyl-L-homocysteine + H(+). The protein operates within porphyrin-containing compound metabolism; siroheme biosynthesis; precorrin-2 from uroporphyrinogen III: step 1/1. Its function is as follows. Catalyzes the methylation of both C-2 and C-7 of uroporphyrinogen III leading to precorrin-1 and precorrin-2; their oxidative esterification gives respectively factor I octamethyl ester and sirohydrochlorin. Inactivation of uroporphyrinogen-III methyltransferase results in the loss of nitrite and nitric oxide reductase activities, but not of nitrous oxide reductase activity. Likely involved in heme D1 biosynthesis. The protein is Uroporphyrinogen-III C-methyltransferase (nirE) of Paracoccus denitrificans (strain Pd 1222).